We begin with the raw amino-acid sequence, 440 residues long: Chromosome partition protein MukF (440 aa).

Residues 208 to 236 (LSETSGTLRELQDTLEAAGDKLQANLLRI) are leucine-zipper.

The protein belongs to the MukF family. In terms of assembly, interacts, and probably forms a ternary complex, with MukE and MukB via its C-terminal region. The complex formation is stimulated by calcium or magnesium. It is required for an interaction between MukE and MukB.

It localises to the cytoplasm. The protein resides in the nucleoid. Its function is as follows. Involved in chromosome condensation, segregation and cell cycle progression. May participate in facilitating chromosome segregation by condensation DNA from both sides of a centrally located replisome during cell division. Not required for mini-F plasmid partitioning. Probably acts via its interaction with MukB and MukE. Overexpression results in anucleate cells. It has a calcium binding activity. The chain is Chromosome partition protein MukF from Serratia proteamaculans (strain 568).